The primary structure comprises 294 residues: Nucleotide-binding protein CPF_0343 (294 aa).

ATP is bound at residue 8-15 (GLSGAGKT). 59 to 62 (DIRG) contacts GTP.

It belongs to the RapZ-like family.

Displays ATPase and GTPase activities. This chain is Nucleotide-binding protein CPF_0343, found in Clostridium perfringens (strain ATCC 13124 / DSM 756 / JCM 1290 / NCIMB 6125 / NCTC 8237 / Type A).